Here is a 103-residue protein sequence, read N- to C-terminus: Large ribosomal subunit protein bL21 (103 aa).

This sequence belongs to the bacterial ribosomal protein bL21 family. Part of the 50S ribosomal subunit. Contacts protein L20.

This protein binds to 23S rRNA in the presence of protein L20. The sequence is that of Large ribosomal subunit protein bL21 from Albidiferax ferrireducens (strain ATCC BAA-621 / DSM 15236 / T118) (Rhodoferax ferrireducens).